Here is a 341-residue protein sequence, read N- to C-terminus: MFRSALVRSSASAKQSLLRRSFSSGSVPERKVAILGAAGGIGQPLALLMKLNPLVSSLSLYDIANTPGVAADVGHINTRSQVVGYMGDDNLAKALEGADLVIIPAGVPRKPGMTRDDLFNINAGIVKNLWSAIAKYCPHALVNMISNPVNSTVPIAAEIFKKAGMYDEKKLFGVTTLDVVRVKTSYAGKANVPVAEVNVPAIVGHAGVTILPLFSQATPQAILSGDALTVTTKRTQDGGTEVEEAKAGKGSATLSMAYAGALFADACLKGLNGVPDVVECSYVQSTITELPFFASKVRLGKNGVEEVLDLGPLSDFEKEGLEALRPGIKSTIEKGVKFANQ.

A mitochondrion-targeting transit peptide spans 1–22 (MFRSALVRSSASAKQSLLRRSF). Residues 36-42 (GAAGGIG) and aspartate 62 each bind NAD(+). 2 residues coordinate substrate: arginine 109 and arginine 115. Residues asparagine 122 and 145-147 (ISN) each bind NAD(+). Asparagine 147 and arginine 181 together coordinate substrate. Methionine 256 is a binding site for NAD(+).

This sequence belongs to the LDH/MDH superfamily. MDH type 1 family. As to quaternary structure, homodimer.

The protein localises to the mitochondrion matrix. It catalyses the reaction (S)-malate + NAD(+) = oxaloacetate + NADH + H(+). The sequence is that of Malate dehydrogenase, mitochondrial (MDH) from Brassica napus (Rape).